A 211-amino-acid polypeptide reads, in one-letter code: Thiamine-phosphate synthase (211 aa).

4-amino-2-methyl-5-(diphosphooxymethyl)pyrimidine is bound by residues 37–41 (QLRIK) and Asn-69. Mg(2+) is bound by residues Asp-70 and Asp-89. Residue Ser-108 coordinates 4-amino-2-methyl-5-(diphosphooxymethyl)pyrimidine. 134 to 136 (TQT) provides a ligand contact to 2-[(2R,5Z)-2-carboxy-4-methylthiazol-5(2H)-ylidene]ethyl phosphate. A 4-amino-2-methyl-5-(diphosphooxymethyl)pyrimidine-binding site is contributed by Lys-137. 2-[(2R,5Z)-2-carboxy-4-methylthiazol-5(2H)-ylidene]ethyl phosphate is bound by residues Gly-166 and 186 to 187 (VS).

This sequence belongs to the thiamine-phosphate synthase family. Mg(2+) is required as a cofactor.

The enzyme catalyses 2-[(2R,5Z)-2-carboxy-4-methylthiazol-5(2H)-ylidene]ethyl phosphate + 4-amino-2-methyl-5-(diphosphooxymethyl)pyrimidine + 2 H(+) = thiamine phosphate + CO2 + diphosphate. It carries out the reaction 2-(2-carboxy-4-methylthiazol-5-yl)ethyl phosphate + 4-amino-2-methyl-5-(diphosphooxymethyl)pyrimidine + 2 H(+) = thiamine phosphate + CO2 + diphosphate. The catalysed reaction is 4-methyl-5-(2-phosphooxyethyl)-thiazole + 4-amino-2-methyl-5-(diphosphooxymethyl)pyrimidine + H(+) = thiamine phosphate + diphosphate. Its pathway is cofactor biosynthesis; thiamine diphosphate biosynthesis; thiamine phosphate from 4-amino-2-methyl-5-diphosphomethylpyrimidine and 4-methyl-5-(2-phosphoethyl)-thiazole: step 1/1. In terms of biological role, condenses 4-methyl-5-(beta-hydroxyethyl)thiazole monophosphate (THZ-P) and 2-methyl-4-amino-5-hydroxymethyl pyrimidine pyrophosphate (HMP-PP) to form thiamine monophosphate (TMP). The sequence is that of Thiamine-phosphate synthase from Escherichia coli O157:H7.